A 311-amino-acid chain; its full sequence is tRNA-cytidine(32) 2-sulfurtransferase (311 aa).

The PP-loop motif motif lies at 47 to 52 (SGGKDS). [4Fe-4S] cluster is bound by residues cysteine 122, cysteine 125, and cysteine 213.

The protein belongs to the TtcA family. As to quaternary structure, homodimer. The cofactor is Mg(2+). Requires [4Fe-4S] cluster as cofactor.

Its subcellular location is the cytoplasm. It catalyses the reaction cytidine(32) in tRNA + S-sulfanyl-L-cysteinyl-[cysteine desulfurase] + AH2 + ATP = 2-thiocytidine(32) in tRNA + L-cysteinyl-[cysteine desulfurase] + A + AMP + diphosphate + H(+). Its pathway is tRNA modification. Its function is as follows. Catalyzes the ATP-dependent 2-thiolation of cytidine in position 32 of tRNA, to form 2-thiocytidine (s(2)C32). The sulfur atoms are provided by the cysteine/cysteine desulfurase (IscS) system. In Shigella boydii serotype 4 (strain Sb227), this protein is tRNA-cytidine(32) 2-sulfurtransferase.